We begin with the raw amino-acid sequence, 803 residues long: Isoamylase 1, chloroplastic (803 aa).

The N-terminal 54 residues, 1–54 (MASLPHCLSARPLVVAAAPGRPGPGPGPWLRGGARRRNAAFSAGNAGRRVGLRR), are a transit peptide targeting the chloroplast. Aspartate 432 serves as the catalytic Nucleophile. Glutamate 488 acts as the Proton donor in catalysis.

It belongs to the glycosyl hydrolase 13 family. As to quaternary structure, forms a homo-pentamer and a hetero-hexamer composed of five ISA1 and one ISA2. Interacts with FLO6/SIP4. In terms of tissue distribution, highly expressed in developing endosperm. Expressed at low levels in leaves.

It is found in the plastid. The protein resides in the chloroplast. The catalysed reaction is Hydrolysis of (1-&gt;6)-alpha-D-glucosidic branch linkages in glycogen, amylopectin and their beta-limit dextrins.. The protein operates within glycan biosynthesis; starch biosynthesis. With respect to regulation, inhibited by copper chloride, mercury chloride, ammonium molybdate and para-chloromercuribenzoate. Starch-debranching enzyme involved in amylopectin biosynthesis in endosperm. Functions by removing excess branches or improper branches that interfere with the formation of double helices of the cluster chains of amylopectin and crystallization of starch. Works as ISA1 homooligomer or together with ISA2 as heterooligomer. The heterooligomer ISA1 and ISA2 possesses higher affinity than the ISA1 homooligomer for various branched polyglucans in vitro, but no marked differences exist in chain preferences for debranching of amylopectin and phytoglycogen between these forms. The sequence is that of Isoamylase 1, chloroplastic from Oryza sativa subsp. japonica (Rice).